Reading from the N-terminus, the 554-residue chain is Solute carrier family 22 member 22 (554 aa).

Topologically, residues 1 to 15 (MDFDEILHHVGDSGR) are cytoplasmic. The chain crosses the membrane as a helical span at residues 16-36 (FQICMIILLNILSLVLSPHDV). Residues 37–144 (LENFTAAIPA…DLVCDFQSFK (108 aa)) lie on the Extracellular side of the membrane. An N-linked (GlcNAc...) asparagine glycan is attached at N39. A helical transmembrane segment spans residues 145 to 165 (YYAQATSLAGHLVSCPLSGII). Residues 166–172 (SDRFGRK) lie on the Cytoplasmic side of the membrane. Residues 173–193 (PLLMYCSLAYGAVGTYCAFAP) traverse the membrane as a helical segment. The N-linked (GlcNAc...) asparagine glycan is linked to N194. The Extracellular portion of the chain corresponds to 194 to 199 (NFSVYC). The chain crosses the membrane as a helical span at residues 200–220 (VLRFLLSAFQSTILINSLILV). Residues 221 to 231 (LEEASVQWHPT) lie on the Cytoplasmic side of the membrane. The helical transmembrane segment at 232–252 (IIVLSGLFNSIGQGVLGGLAY) threads the bilayer. Residues 253-258 (VISDWH) are Extracellular-facing. The helical transmembrane segment at 259–279 (LLQLAYALPFFIFFVLFCWVP) threads the bilayer. Over 280-347 (ESVRWLIITG…DIFINPLIRK (68 aa)) the chain is Cytoplasmic. The chain crosses the membrane as a helical span at residues 348-368 (IVLSNSSLLFAELFSFVGLLL). Residues 369-376 (DVQLLGKN) lie on the Extracellular side of the membrane. A helical membrane pass occupies residues 377-397 (MFLTQIFLGAIDVPSKSLTYF). The Cytoplasmic portion of the chain corresponds to 398–405 (TIRNVSRR). The helical transmembrane segment at 406–426 (PLIAFLLLTTGSCITITIFIS) threads the bilayer. The Extracellular portion of the chain corresponds to 427 to 434 (EEMYVLRT). A helical transmembrane segment spans residues 435–455 (IIFILGKGCFAAFTCISTTYI). At 456-466 (NELSPVELRST) the chain is on the cytoplasmic side. A helical transmembrane segment spans residues 467-487 (LNGVFLAVVRLAGVLSALTLA). Over 488–491 (TRKY) the chain is Extracellular. The chain crosses the membrane as a helical span at residues 492–512 (FVYLPMILYGVLPIVATISIL). Over 513–554 (FLPETFNLPHTDIIKDMEKRKRLMSKNISKKEGQDFLETTEC) the chain is Cytoplasmic.

This sequence belongs to the major facilitator (TC 2.A.1) superfamily. Organic cation transporter (TC 2.A.1.19) family. As to expression, specifically expressed in kidney where it is found in proximal convoluted tubules (at protein level). Colocalizes with the prostaglandin-inactivating enzyme HPGD in kidney (at protein level). Not detected in other tissues tested.

The protein localises to the basolateral cell membrane. In terms of biological role, sodium-independent organic anion transporter which exhibits high specificity for a subset of prostaglandins including prostaglandin E2 (PGE2), prostaglandin E1 (PGE1), prostaglandin F2-alpha (PGF2-alpha) and prostaglandin D2 (PGD2). The polypeptide is Solute carrier family 22 member 22 (Mus musculus (Mouse)).